Reading from the N-terminus, the 372-residue chain is Solute carrier family 35 member F6 (372 aa).

The first 18 residues, 1-18, serve as a signal peptide directing secretion; the sequence is MAWTKYQLFLAGLMLVTG. Transmembrane regions (helical) follow at residues 48–68 and 89–109; these read FVQAVGMFLGEFSCLAAFYLL and LLFLPPALCDMTGTSIMYVAL. One can recognise an EamA domain in the interval 105–160; sequence MYVALNMTSASSFQMLRGAVIIFTGLFSVAFLDRRLVPSQWLGILITIAGLVVVGL. Asparagine 110 is a glycosylation site (N-linked (GlcNAc...) asparagine). 7 consecutive transmembrane segments (helical) span residues 116 to 136, 145 to 165, 176 to 196, 211 to 231, 261 to 281, 293 to 312, and 320 to 336; these read SFQMLRGAVIIFTGLFSVAFL, WLGILITIAGLVVVGLADLLS, VITGDLLIIMAQIIIAIQMVL, AVGIEGFFGFVILSLLLVPMY, LIALALLGNISSIAFFNFSGI, MVLDTLRTVVIWAFTLALGW, and ILGFLILLMGTALYNGL. Phosphothreonine is present on threonine 366.

It belongs to the SLC35F solute transporter family. Interacts with SLC25A5.

It localises to the mitochondrion. The protein resides in the lysosome membrane. In terms of biological role, involved in the maintenance of mitochondrial membrane potential in pancreatic ductal adenocarcinoma (PDAC) cells. Promotes pancreatic ductal adenocarcinoma (PDAC) cell growth. May play a role as a nucleotide-sugar transporter. The chain is Solute carrier family 35 member F6 (Slc35f6) from Rattus norvegicus (Rat).